The following is a 1723-amino-acid chain: Homeobox protein 5 (1723 aa).

Residues 36–50 (QLQQPQHQPQHYQQQ) show a composition bias toward low complexity. Disordered regions lie at residues 36–425 (QLQQ…APGT), 440–522 (SSSP…QLQQ), 543–756 (ENIT…PPLT), 878–978 (GTIV…TGSL), 1080–1214 (IFNN…SENN), 1226–1264 (VSLGSLPTNTPSSMEIEQQQQQQQQQQQQQQQQHLNQQQ), 1345–1399 (IVNN…TQTS), 1456–1498 (QQQQ…STTT), and 1513–1547 (HNQQVSPISPRSPRSPHGTSGDYNDGSQSPSSRRK). Positions 51 to 72 (DSFVSPNLDNNNPQIHVQSNNY) are enriched in polar residues. Composition is skewed to low complexity over residues 73–107 (NQNGFVGYNNSNNNNNNNQHMNNQYSNSFHNNNSS) and 114–212 (NNSS…NNNN). Composition is skewed to polar residues over residues 223 to 237 (SQPTSPYNNPIQHNP) and 244 to 257 (GQHNPFNGNQMVMD). Composition is skewed to low complexity over residues 258–284 (NNNNNNNNNNSNVFNSNSNSNVFNSNS) and 291–350 (NNNN…NNNN). The stretch at 300-351 (YNNNNNNNNNNNSNSNNNNNNNNNNNNNNNNNNNNNNNNNNNNNSNNNNNNQ) forms a coiled coil. The span at 351 to 369 (QFSQSYDSTLGNNRFSSMM) shows a compositional bias: polar residues. 2 stretches are compositionally biased toward low complexity: residues 371–421 (QPIQ…LIGS) and 440–465 (SSSPTSSPSSPVKKGKSQSALALSSS). The span at 483-510 (MSSITNTNLKSTQASTLKESKRSNSSPN) shows a compositional bias: polar residues. 3 stretches are compositionally biased toward low complexity: residues 511-522 (LKKQMQLQQLQQ), 544-571 (NITNNNNNNNNNNNNNNNNNNNNNITNN), and 581-593 (NSNNINQSSDSIN). The segment covering 632–655 (HISTTQQSPSLNGSTGGSMLTPTM) has biased composition (polar residues). A compositionally biased stretch (gly residues) spans 660–669 (LSGGGSGGGF). The span at 673–685 (ISPTGTTSNKDLQ) shows a compositional bias: polar residues. 3 stretches are compositionally biased toward low complexity: residues 686 to 699 (SSPSPSPLLKSMSM), 710 to 727 (SMSSPLSPNSSLSSSNGL), and 734 to 745 (SNNMNSSGGIPT). Residues 746–755 (PSTPTSPPPL) are compositionally biased toward pro residues. The segment covering 882 to 928 (NPTNVNNNNINNNNNNNNNNNNNNNNNNNNNNNNNNNNTTTTTTTTT) has biased composition (low complexity). Residues 929–945 (SANTVQSGTTSNSNLVF) are compositionally biased toward polar residues. 2 stretches are compositionally biased toward low complexity: residues 946–977 (QQTSNSNTLSPSQQQQQQTQQQQSINGSSTGS) and 1082–1146 (NNNN…SINS). Polar residues-rich tracts occupy residues 1147–1159 (PRPSTPTTLNSSG) and 1176–1187 (DISTGLMASSDQ). Positions 1193-1270 (QQQQHQQLVN…NQQQILHQQL (78 aa)) form a coiled coil. Positions 1194–1214 (QQQHQQLVNNNNNNMNNSENN) are enriched in low complexity. Over residues 1226 to 1242 (VSLGSLPTNTPSSMEIE) the composition is skewed to polar residues. Composition is skewed to low complexity over residues 1243–1264 (QQQQQQQQQQQQQQQQHLNQQQ), 1347–1384 (NNQNNNNNDQNNNNNNNNNNNSTTNSNVNNNNNTTNTP), 1456–1480 (QQQQQQQETPHTPTSNSISSPRSSP), 1487–1498 (SNTNTTTTSTTT), and 1518–1528 (SPISPRSPRSP). Residues 1431–1464 (VLQQQQQQQQQQQQQQQQQQQQQQQQQQQQQQET) adopt a coiled-coil conformation. Positions 1529-1543 (HGTSGDYNDGSQSPS) are enriched in polar residues. The homeobox DNA-binding region spans 1543–1607 (SSRRKNRFTD…NKRARSRPSP (65 aa)). The EF-hand domain maps to 1553 to 1588 (FQIKRMNDCFENLDKNNNGKFTSEEICQIATELGLT). 2 disordered regions span residues 1598–1625 (NKRARSRPSPRGQPTNPLTSSTNNGNNS) and 1661–1723 (LHQQ…TINE). Residues 1612 to 1625 (TNPLTSSTNNGNNS) show a composition bias toward low complexity. A coiled-coil region spans residues 1632–1702 (LQQQHLQQVQ…NNNNNNNNNN (71 aa)). Positions 1665-1675 (SANTTPQLNSM) are enriched in polar residues. A compositionally biased stretch (low complexity) spans 1676 to 1723 (NPNSINYNNNNNNNNNNNNNNNNNNNNNNNNNNNNNNIINNNITTINE).

The protein localises to the nucleus. Its function is as follows. Putative transcription factor. The protein is Homeobox protein 5 (hbx5-1) of Dictyostelium discoideum (Social amoeba).